The chain runs to 100 residues: MAEEHNHNHEEENIIWITNEEGKEEAYEILFDFDSEDFDKSYVLYFPAGKGEDEEIEILASSYIQDEEGKQGQLKPVETDEEWDMIEEILATFLADEDEE.

This sequence belongs to the UPF0473 family.

This Listeria monocytogenes serotype 4b (strain CLIP80459) protein is UPF0473 protein Lm4b_01511.